We begin with the raw amino-acid sequence, 185 residues long: dCTP deaminase (185 aa).

DCTP is bound by residues 107-112 (KSTYAR), 131-133 (TLE), Q152, Y166, and Q176. Catalysis depends on E133, which acts as the Proton donor/acceptor.

The protein belongs to the dCTP deaminase family. In terms of assembly, homotrimer.

It catalyses the reaction dCTP + H2O + H(+) = dUTP + NH4(+). It functions in the pathway pyrimidine metabolism; dUMP biosynthesis; dUMP from dCTP (dUTP route): step 1/2. Catalyzes the deamination of dCTP to dUTP. The sequence is that of dCTP deaminase from Anaplasma phagocytophilum (strain HZ).